A 216-amino-acid polypeptide reads, in one-letter code: Adenylate kinase (216 aa).

10–15 is a binding site for ATP; it reads GAGKGT. Residues 30-59 are NMP; the sequence is STGDMIRETIKSDSEIGKELKKVLDAGQLV. Residues Thr31, Arg36, 57–59, and Gln92 each bind AMP; that span reads QLV. The interval 122 to 159 is LID; sequence GRRVHPASGRTYHTKFNPPKVEGKDDITGEDLITRTDD. ATP is bound by residues Arg123 and 132-133; that span reads TY. Arg156 and Arg167 together coordinate AMP. Gln202 is an ATP binding site.

It belongs to the adenylate kinase family. As to quaternary structure, monomer.

It is found in the cytoplasm. It carries out the reaction AMP + ATP = 2 ADP. It functions in the pathway purine metabolism; AMP biosynthesis via salvage pathway; AMP from ADP: step 1/1. Catalyzes the reversible transfer of the terminal phosphate group between ATP and AMP. Plays an important role in cellular energy homeostasis and in adenine nucleotide metabolism. The sequence is that of Adenylate kinase from Francisella philomiragia subsp. philomiragia (strain ATCC 25017 / CCUG 19701 / FSC 153 / O#319-036).